The chain runs to 72 residues: Translation initiation factor IF-1 (72 aa).

The region spanning 1-72 (MAKKDVIELE…TRGRITWRKK (72 aa)) is the S1-like domain.

Belongs to the IF-1 family. In terms of assembly, component of the 30S ribosomal translation pre-initiation complex which assembles on the 30S ribosome in the order IF-2 and IF-3, IF-1 and N-formylmethionyl-tRNA(fMet); mRNA recruitment can occur at any time during PIC assembly.

The protein localises to the cytoplasm. One of the essential components for the initiation of protein synthesis. Stabilizes the binding of IF-2 and IF-3 on the 30S subunit to which N-formylmethionyl-tRNA(fMet) subsequently binds. Helps modulate mRNA selection, yielding the 30S pre-initiation complex (PIC). Upon addition of the 50S ribosomal subunit IF-1, IF-2 and IF-3 are released leaving the mature 70S translation initiation complex. The polypeptide is Translation initiation factor IF-1 (Clostridioides difficile (strain 630) (Peptoclostridium difficile)).